The following is a 290-amino-acid chain: Diaminopimelate epimerase (290 aa).

Substrate contacts are provided by Asn-14 and Asn-67. Catalysis depends on Cys-76, which acts as the Proton donor. Residues 77–78 (GN), Asn-166, Asn-199, and 217–218 (ER) each bind substrate. Catalysis depends on Cys-226, which acts as the Proton acceptor. 227 to 228 (GT) serves as a coordination point for substrate.

It belongs to the diaminopimelate epimerase family. Homodimer.

It localises to the cytoplasm. It catalyses the reaction (2S,6S)-2,6-diaminopimelate = meso-2,6-diaminopimelate. The protein operates within amino-acid biosynthesis; L-lysine biosynthesis via DAP pathway; DL-2,6-diaminopimelate from LL-2,6-diaminopimelate: step 1/1. Functionally, catalyzes the stereoinversion of LL-2,6-diaminopimelate (L,L-DAP) to meso-diaminopimelate (meso-DAP), a precursor of L-lysine and an essential component of the bacterial peptidoglycan. This Geobacillus kaustophilus (strain HTA426) protein is Diaminopimelate epimerase.